Reading from the N-terminus, the 590-residue chain is Negative elongation factor C/D (590 aa).

The disordered stretch occupies residues 16 to 43 (GSAAEWGDEADGGQQEDDSGEGEDDAEV). The segment covering 21 to 43 (WGDEADGGQQEDDSGEGEDDAEV) has biased composition (acidic residues).

Belongs to the NELF-D family. In terms of assembly, the NELF complex is composed of NELFA, NELFB, NELFCD (isoform NELF-C or isoform NELF-D) and NELFE; NELFA and NELFCD form a stable subcomplex that binds primarily through NELFCD to the N-terminus of NELFB. Binds RNA which may help to stabilize the NELF complex on nucleic acid. In vitro, the NELFA:NELFCD subcomplex binds to ssDNA and ssRNA in a sequence- and structure-dependent manner. Interacts with ARAF. Interacts with PCF11. Interacts with KAT8. In terms of tissue distribution, widely expressed. Expressed in heart, brain, lung, placenta, liver, skeletal and cardiac muscle, adrenal, thyroid, kidney and pancreas.

The protein localises to the nucleus. Functionally, essential component of the NELF complex, a complex that negatively regulates the elongation of transcription by RNA polymerase II. The NELF complex, which acts via an association with the DSIF complex and causes transcriptional pausing, is counteracted by the P-TEFb kinase complex. Its function is as follows. (Microbial infection) The NELF complex is involved in HIV-1 latency possibly involving recruitment of PCF11 to paused RNA polymerase II. The polypeptide is Negative elongation factor C/D (NELFCD) (Homo sapiens (Human)).